Consider the following 327-residue polypeptide: MRASIWGTGSYLPKKVLTNADLEKMVETSDEWISTRTGIKERRIASAEEFSSFMGAKAAEKAIEAAKISKSQIDCIVFATAAPDYIFPSSAALAQAYLGIKEVPAFDCLVACTGFLYGLSIAKAYVEAGMYQCVLVIAADKLSSFVNYEDRNTCVLFGDGGSACVVGPSRPGSLKISKVNLGADGKQGDLLRLPAGGSRCPASQDTIQNQQHFITMEGKEVFKHAVRRMEFAAKTCITEAGLQEEDIDWLVPHQANERIIDAIAKRFAVEDSRVFKTLAKYGNTAASSVGIALDELLRTHDIHSKERLLLVAFGGGLSWGAVILQQM.

Active-site residues include C112 and H253. Positions Q254–R258 are ACP-binding. N283 is an active-site residue.

Belongs to the thiolase-like superfamily. FabH family. In terms of assembly, homodimer.

The protein resides in the cytoplasm. It catalyses the reaction malonyl-[ACP] + acetyl-CoA + H(+) = 3-oxobutanoyl-[ACP] + CO2 + CoA. The protein operates within lipid metabolism; fatty acid biosynthesis. Catalyzes the condensation reaction of fatty acid synthesis by the addition to an acyl acceptor of two carbons from malonyl-ACP. Catalyzes the first condensation reaction which initiates fatty acid synthesis and may therefore play a role in governing the total rate of fatty acid production. Possesses both acetoacetyl-ACP synthase and acetyl transacylase activities. Its substrate specificity determines the biosynthesis of branched-chain and/or straight-chain of fatty acids. In Chlamydia muridarum (strain MoPn / Nigg), this protein is Beta-ketoacyl-[acyl-carrier-protein] synthase III.